Reading from the N-terminus, the 131-residue chain is D-ribose pyranase (131 aa).

H20 functions as the Proton donor in the catalytic mechanism. Residues D28, H98, and 120-122 (YAN) contribute to the substrate site.

It belongs to the RbsD / FucU family. RbsD subfamily. Homodecamer.

Its subcellular location is the cytoplasm. The enzyme catalyses beta-D-ribopyranose = beta-D-ribofuranose. It functions in the pathway carbohydrate metabolism; D-ribose degradation; D-ribose 5-phosphate from beta-D-ribopyranose: step 1/2. Functionally, catalyzes the interconversion of beta-pyran and beta-furan forms of D-ribose. This is D-ribose pyranase from Enterococcus faecalis (strain ATCC 700802 / V583).